Consider the following 232-residue polypeptide: Cytidylate kinase (232 aa).

11 to 19 (GPAGAGKST) serves as a coordination point for ATP.

The protein belongs to the cytidylate kinase family. Type 1 subfamily.

The protein resides in the cytoplasm. The enzyme catalyses CMP + ATP = CDP + ADP. The catalysed reaction is dCMP + ATP = dCDP + ADP. The polypeptide is Cytidylate kinase (Roseiflexus castenholzii (strain DSM 13941 / HLO8)).